We begin with the raw amino-acid sequence, 163 residues long: Nucleotide-binding protein PM1656 (163 aa).

Belongs to the YajQ family.

Functionally, nucleotide-binding protein. The polypeptide is Nucleotide-binding protein PM1656 (Pasteurella multocida (strain Pm70)).